A 216-amino-acid chain; its full sequence is Thymidylate kinase (216 aa).

9–16 (GIEGSGKT) contacts ATP.

It belongs to the thymidylate kinase family.

It carries out the reaction dTMP + ATP = dTDP + ADP. In terms of biological role, phosphorylation of dTMP to form dTDP in both de novo and salvage pathways of dTTP synthesis. This is Thymidylate kinase from Syntrophotalea carbinolica (strain DSM 2380 / NBRC 103641 / GraBd1) (Pelobacter carbinolicus).